Reading from the N-terminus, the 72-residue chain is UPF0729 protein C18orf32 homolog (72 aa).

The tract at residues 1–33 (MVCIPCIVIPVLLWIFKKFLEPYIYPVVSRIWP) is necessary for its localzation to the endoplasmic reticulum and lipid droplets. The segment at 36-72 (AVQQSGDKNMSKVDCKGAGTNGLPTKGPTEVSDKKKD) is disordered.

Belongs to the UPF0729 family. Interacts with DERL1 and AMFR. Undergoes ER-associated degradation (ERAD).

Its subcellular location is the endoplasmic reticulum. The protein localises to the lipid droplet. May activate the NF-kappa-B signaling pathway. The polypeptide is UPF0729 protein C18orf32 homolog (Mus musculus (Mouse)).